The chain runs to 330 residues: Peptide transport system ATP-binding protein SapD (330 aa).

In terms of domain architecture, ABC transporter spans 6 to 259; that stretch reads IRNLTIEFKT…PHHPYTQALI (254 aa). 40–47 is an ATP binding site; that stretch reads GESGSGKS.

The protein belongs to the ABC transporter superfamily.

The protein localises to the cell inner membrane. Its function is as follows. Involved in a peptide intake transport system that plays a role in the resistance to antimicrobial peptides. The protein is Peptide transport system ATP-binding protein SapD of Salmonella typhimurium (strain LT2 / SGSC1412 / ATCC 700720).